We begin with the raw amino-acid sequence, 121 residues long: Small ribosomal subunit protein bS6 (121 aa).

It belongs to the bacterial ribosomal protein bS6 family.

In terms of biological role, binds together with bS18 to 16S ribosomal RNA. The protein is Small ribosomal subunit protein bS6 of Rickettsia conorii (strain ATCC VR-613 / Malish 7).